The sequence spans 606 residues: NADH-ubiquinone oxidoreductase chain 5 (606 aa).

The next 16 helical transmembrane spans lie at phenylalanine 4–isoleucine 24, asparagine 38–glycine 58, methionine 87–tyrosine 107, isoleucine 114–alanine 134, leucine 140–glycine 160, alanine 171–phenylalanine 191, leucine 213–leucine 233, threonine 241–isoleucine 261, valine 273–leucine 293, isoleucine 301–asparagine 320, alanine 325–isoleucine 347, methionine 366–leucine 386, leucine 409–phenylalanine 429, leucine 457–isoleucine 477, leucine 488–threonine 508, and leucine 583–methionine 603.

This sequence belongs to the complex I subunit 5 family. In terms of assembly, core subunit of respiratory chain NADH dehydrogenase (Complex I) which is composed of 45 different subunits.

Its subcellular location is the mitochondrion inner membrane. It carries out the reaction a ubiquinone + NADH + 5 H(+)(in) = a ubiquinol + NAD(+) + 4 H(+)(out). Core subunit of the mitochondrial membrane respiratory chain NADH dehydrogenase (Complex I) which catalyzes electron transfer from NADH through the respiratory chain, using ubiquinone as an electron acceptor. Essential for the catalytic activity and assembly of complex I. This is NADH-ubiquinone oxidoreductase chain 5 (MT-ND5) from Ceratotherium simum (White rhinoceros).